We begin with the raw amino-acid sequence, 133 residues long: Small ribosomal subunit protein uS8 (133 aa).

The protein belongs to the universal ribosomal protein uS8 family. In terms of assembly, part of the 30S ribosomal subunit. Contacts proteins S5 and S12.

Functionally, one of the primary rRNA binding proteins, it binds directly to 16S rRNA central domain where it helps coordinate assembly of the platform of the 30S subunit. The polypeptide is Small ribosomal subunit protein uS8 (Deinococcus geothermalis (strain DSM 11300 / CIP 105573 / AG-3a)).